A 503-amino-acid chain; its full sequence is Nuclear respiratory factor 1 (503 aa).

Residues 1–78 form a dimerization region; the sequence is MEEHGVTQTE…AHLAAAGPVG (78 aa). A disordered region spans residues 36–57; that stretch reads SMLSADEDSPSSPEDTSYDDSD. 5 positions are modified to phosphoserine; by CK2: Ser-39, Ser-44, Ser-46, Ser-47, and Ser-52. A Nuclear localization signal motif is present at residues 88–116; the sequence is GKKRKRPHVFESNPSIRKRQQTRLLRKLR. The DNA-binding element occupies 109 to 305; it reads TRLLRKLRAT…SIAHLVPSQT (197 aa). Residue Lys-139 forms a Glycyl lysine isopeptide (Lys-Gly) (interchain with G-Cter in SUMO2) linkage. Residues 301–476 form a required for transcriptional activation region; sequence VPSQTVVQTF…AQGNGPVQVA (176 aa).

The protein belongs to the NRF1/Ewg family. In terms of assembly, homodimer. Binds DNA as a dimer. Interacts with PPRC1. Phosphorylation enhances DNA binding. As to expression, ubiquitously expressed with strongest expression in skeletal muscle.

It localises to the nucleus. Transcription factor that activates the expression of the EIF2S1 (EIF2-alpha) gene. Links the transcriptional modulation of key metabolic genes to cellular growth and development. Implicated in the control of nuclear genes required for respiration, heme biosynthesis, and mitochondrial DNA transcription and replication. This chain is Nuclear respiratory factor 1 (NRF1), found in Homo sapiens (Human).